The following is a 209-amino-acid chain: Ribosomal RNA small subunit methyltransferase G (209 aa).

S-adenosyl-L-methionine is bound by residues G72, L77, 123-124, and R138; that span reads AE.

This sequence belongs to the methyltransferase superfamily. RNA methyltransferase RsmG family.

It localises to the cytoplasm. Functionally, specifically methylates the N7 position of guanine in position 518 of 16S rRNA. The polypeptide is Ribosomal RNA small subunit methyltransferase G (Leifsonia xyli subsp. xyli (strain CTCB07)).